The following is an 80-amino-acid chain: Clavaspirin (80 aa).

The N-terminal stretch at 1 to 17 is a signal peptide; sequence MKTIILILLILGLGIDA. A propeptide spanning residues 18 to 29 is cleaved from the precursor; sequence KSLEESKADEEK. A Leucine amide modification is found at L52. The propeptide occupies 53–80; the sequence is GDDQQDNGKFYGYYAEDNGKHWYDTGDQ.

As to expression, pharyngeal tissues and hemocytes.

Its subcellular location is the secreted. In terms of biological role, exhibits broad-spectrum antimicrobial activity against both Gram-positive and Gram-negative bacteria. Has potent hemolytic activity. The sequence is that of Clavaspirin from Styela clava (Sea squirt).